A 636-amino-acid polypeptide reads, in one-letter code: Threonine--tRNA ligase (636 aa).

The TGS domain occupies 1 to 63; it reads MSSISIALPD…KDDSRVEIIT (63 aa). Residues 243–534 form a catalytic region; it reads DHRRLGRELD…LIEHYAGNFP (292 aa). Zn(2+)-binding residues include Cys-335, His-386, and His-511.

This sequence belongs to the class-II aminoacyl-tRNA synthetase family. Homodimer. Zn(2+) serves as cofactor.

The protein localises to the cytoplasm. It catalyses the reaction tRNA(Thr) + L-threonine + ATP = L-threonyl-tRNA(Thr) + AMP + diphosphate + H(+). In terms of biological role, catalyzes the attachment of threonine to tRNA(Thr) in a two-step reaction: L-threonine is first activated by ATP to form Thr-AMP and then transferred to the acceptor end of tRNA(Thr). Also edits incorrectly charged L-seryl-tRNA(Thr). The sequence is that of Threonine--tRNA ligase from Pelobacter propionicus (strain DSM 2379 / NBRC 103807 / OttBd1).